The following is a 508-amino-acid chain: Photosystem II CP47 reaction center protein (508 aa).

Helical transmembrane passes span 21–36, 101–115, 140–156, 203–218, 237–252, and 457–472; these read SVHI…WAGS, IVFS…IWHW, GIHL…FGAF, IAAG…FHLS, VLSS…AFVV, and SFAL…HGAR.

It belongs to the PsbB/PsbC family. PsbB subfamily. PSII is composed of 1 copy each of membrane proteins PsbA, PsbB, PsbC, PsbD, PsbE, PsbF, PsbH, PsbI, PsbJ, PsbK, PsbL, PsbM, PsbT, PsbX, PsbY, PsbZ, Psb30/Ycf12, at least 3 peripheral proteins of the oxygen-evolving complex and a large number of cofactors. It forms dimeric complexes. The cofactor is Binds multiple chlorophylls. PSII binds additional chlorophylls, carotenoids and specific lipids..

The protein resides in the plastid. The protein localises to the chloroplast thylakoid membrane. Functionally, one of the components of the core complex of photosystem II (PSII). It binds chlorophyll and helps catalyze the primary light-induced photochemical processes of PSII. PSII is a light-driven water:plastoquinone oxidoreductase, using light energy to abstract electrons from H(2)O, generating O(2) and a proton gradient subsequently used for ATP formation. This chain is Photosystem II CP47 reaction center protein, found in Phaseolus vulgaris (Kidney bean).